We begin with the raw amino-acid sequence, 196 residues long: Rac-like GTP-binding protein RAC13 (196 aa).

Residue G13 to T20 coordinates GTP. The short motif at Y35–F43 is the Effector region element. GTP is bound by residues D60–Q64 and T118–D121. Position 193 is a cysteine methyl ester (C193). A lipid anchor (S-geranylgeranyl cysteine) is attached at C193. Positions A194–L196 are cleaved as a propeptide — removed in mature form.

The protein belongs to the small GTPase superfamily. Rho family.

Its subcellular location is the cytoplasm. The protein resides in the membrane. Functionally, could participate in a signal transduction pathway that controls cytoskeletal organization. Inactive GDP-bound Rho GTPases reside in the cytosol, are found in a complex with Rho GDP-dissociation inhibitors (Rho GDIs), and are released from the GDI protein in order to translocate to membranes upon activation. The polypeptide is Rac-like GTP-binding protein RAC13 (RAC13) (Gossypium hirsutum (Upland cotton)).